We begin with the raw amino-acid sequence, 381 residues long: Cytochrome b (381 aa).

Helical transmembrane passes span 33-53, 77-98, 113-133, and 178-198; these read FGSL…FLAM, WLLR…FLHV, WNIG…GYVL, and FFAF…VHLL. Residues histidine 83 and histidine 97 each contribute to the heme b site. Residues histidine 182 and histidine 196 each coordinate heme b. Residue histidine 201 participates in a ubiquinone binding. Transmembrane regions (helical) follow at residues 226-246, 288-308, 320-340, and 347-367; these read IKDA…ALFS, LGGV…PLLH, ISQT…WIGG, and FIII…VLMP.

It belongs to the cytochrome b family. The cytochrome bc1 complex contains 11 subunits: 3 respiratory subunits (MT-CYB, CYC1 and UQCRFS1), 2 core proteins (UQCRC1 and UQCRC2) and 6 low-molecular weight proteins (UQCRH/QCR6, UQCRB/QCR7, UQCRQ/QCR8, UQCR10/QCR9, UQCR11/QCR10 and a cleavage product of UQCRFS1). This cytochrome bc1 complex then forms a dimer. The cofactor is heme b.

Its subcellular location is the mitochondrion inner membrane. In terms of biological role, component of the ubiquinol-cytochrome c reductase complex (complex III or cytochrome b-c1 complex) that is part of the mitochondrial respiratory chain. The b-c1 complex mediates electron transfer from ubiquinol to cytochrome c. Contributes to the generation of a proton gradient across the mitochondrial membrane that is then used for ATP synthesis. This chain is Cytochrome b (MT-CYB), found in Pseudantechinus bilarni (Sandstone dibbler).